The sequence spans 170 residues: Photosystem II extrinsic protein V (170 aa).

An N-terminal signal peptide occupies residues 1–33 (MASLFASLGRSLIKLLIVLPVIIGLSISSPAMA). Heme c-binding residues include Cys-70, Cys-73, His-74, and His-125.

This sequence belongs to the cytochrome c family. PsbV subfamily. PSII is composed of 1 copy each of membrane proteins PsbA, PsbB, PsbC, PsbD, PsbE, PsbF, PsbH, PsbI, PsbJ, PsbK, PsbL, PsbM, PsbT, PsbX, PsbY, Psb30/Ycf12, peripheral proteins PsbO, CyanoQ (PsbQ), PsbU, PsbV and a large number of cofactors. It forms dimeric complexes. Heme c is required as a cofactor.

Its subcellular location is the cellular thylakoid membrane. In terms of biological role, one of the extrinsic, lumenal subunits of photosystem II (PSII). PSII is a light-driven water plastoquinone oxidoreductase, using light energy to abstract electrons from H(2)O, generating a proton gradient subsequently used for ATP formation. The extrinsic proteins stabilize the structure of photosystem II oxygen-evolving complex (OEC), the ion environment of oxygen evolution and protect the OEC against heat-induced inactivation. Low-potential cytochrome c that plays a role in the OEC of PSII. The chain is Photosystem II extrinsic protein V from Prochlorococcus marinus (strain MIT 9303).